Consider the following 155-residue polypeptide: CASP-like protein 5B2 (155 aa).

Residues 1–18 are Cytoplasmic-facing; that stretch reads MWEVAWWRPGTWGGLAMR. The helical transmembrane segment at 19-39 threads the bilayer; sequence VGQVAFAGASIGVMASGAGFA. The N-linked (GlcNAc...) asparagine glycan is linked to Asn40. Residues 40–43 lie on the Extracellular side of the membrane; the sequence is NYTA. The helical transmembrane segment at 44 to 64 threads the bilayer; it reads FCYLIASMGLQSLWSLGLACL. Over 65 to 77 the chain is Cytoplasmic; sequence DVYALTVKRDLNN. A helical transmembrane segment spans residues 78–98; it reads ALLVSLFVIGDWVTALLSFAA. At 99–128 the chain is on the extracellular side; it reads SCSAGGVMVLFKRDVLFCRRYPQLPCGRFE. A helical transmembrane segment spans residues 129 to 149; it reads LAVALAFLSWALSATSAIIMF. The Cytoplasmic portion of the chain corresponds to 150-155; it reads CLLAAF.

This sequence belongs to the Casparian strip membrane proteins (CASP) family. As to quaternary structure, homodimer and heterodimers.

It localises to the cell membrane. The polypeptide is CASP-like protein 5B2 (Oryza sativa subsp. indica (Rice)).